The following is a 941-amino-acid chain: MWTEEAGATAEAQESGIRNKSSSSSQIPVVGVVTEDDEAQDVFKPMDLNRVIKLLEETDKDGLEEKQLKFVKKLVQCYQNGLPLRDLAQIFKILNLCSGKIKNQPRFIESAYDIIKLCGLPFLKKKVSDEITYAEDTANSIALLGDLMKIPSSELRIQICKCIVDFYHAEPPKKHIPGYQQASSSYKIQMAEVGGLAKTMVQSMTLLENQLVEKLWVLKVLQHLSTSEVNCTIMMKAQAASGICTHLNDPDPSGQLLFRSSEILWNLLEKSSKEEVIQQLSNLECLLALKEVFKNLFMRGFSHYDRQLRNDILVITTIIAQNPEAPMIECGFTKDLILFATFNEVKSQNLLVKGLKLSNSYEDFELKKLLFNVIVILCKDLPTVQLLIDGKVILALFTYVKKPEKQKIIDWSAAQHEELQLHAIATLSSVAPLLIEEYMSCQGNARVLAFLEWCESEDPFFSHGNSFHGTGGRGNKFAQMRYSLRLLRAVVYLEDETVNKDLCEKGTIQQMIGIFKNIISKPNEKEEAIVLEIQSDILLILSGLCENHIQRKEIFGTEGVDIVLHVMKTDPRKLQSGLGYNVLLFSTLDSIWCCILGCYPSEDYFLEKEGIFLLLDLLALNQKKFCNLILGIMVEFCDNPKTAAHVNAWQGKKDQTAASLLIKLWRKEEKELGVKRDKNGKIIDTKKPLFTSFQEEQKIIPLPANCPSIAVMDVSENIRAKIYAILGKLDFENLPGLSAEDFVTLCIIHRYLDFKIGEIWNEIYEEIKLEKLRPVTTDKKALEAITTASENIGKMVASLQSDIIESQACQDMQNEQKVYAKIQATHKQRELANKSWEDFLARTSNAKTLKKAKSLQEKAIEASRYHKRPQNAIFHQTHIKGLNTTVPSGGVVTVESTPARLVGGPLVDTDIALKKLPIRGGALQRVKAVKIVDAPKKSIPT.

A compositionally biased stretch (low complexity) spans 1–14; the sequence is MWTEEAGATAEAQE. A disordered region spans residues 1–26; the sequence is MWTEEAGATAEAQESGIRNKSSSSSQ. The segment covering 16–26 has biased composition (polar residues); that stretch reads GIRNKSSSSSQ.

Highly expressed in the testis, specifically in sperm (at protein level). Expressed in the brain, kidney, liver, lung, and intestine.

It localises to the cell projection. The protein localises to the cilium. Its subcellular location is the flagellum. Functionally, cilium- and flagellum-associated protein. In the olfactory epithelium, regulates the speed of activation and termination of the odor response and thus contributes to the robustness of olfactory transduction pathways. Required for sperm flagellum assembly and stability. The sequence is that of Cilia- and flagella-associated protein 69 from Homo sapiens (Human).